The chain runs to 470 residues: Probable G-protein coupled receptor 152 (470 aa).

Positions 1-25 (MDTTMEADLGATGHRPRTELDDEDS) are disordered. Topologically, residues 1 to 33 (MDTTMEADLGATGHRPRTELDDEDSYPQGGWDT) are extracellular. Residues 34-54 (VFLVALLLLGLPANGLMAWLA) traverse the membrane as a helical segment. The Cytoplasmic portion of the chain corresponds to 55–65 (GSQARHGAGTR). A helical membrane pass occupies residues 66–86 (LALLLLSLALSDFLFLAAAAF). Residues 87–105 (QILEIRHGGHWPLGTAACR) are Extracellular-facing. A disulfide bridge links cysteine 104 with cysteine 182. The chain crosses the membrane as a helical span at residues 106–126 (FYYFLWGVSYSSGLFLLAALS). At 127 to 148 (LDRCLLALCPHWYPGHRPVRLP) the chain is on the cytoplasmic side. Residues 149–169 (LWVCAGVWVLATLFSVPWLVF) form a helical membrane-spanning segment. Residues 170–194 (PEAAVWWYDLVICLDFWDSEELSLR) lie on the Extracellular side of the membrane. Residues 195–215 (MLEVLGGFLPFLLLLVCHVLT) traverse the membrane as a helical segment. The Cytoplasmic portion of the chain corresponds to 216–257 (QATACRTCHRQQQPAACRGFARVARTILSAYVVLRLPYQLAQ). The helical transmembrane segment at 258–278 (LLYLAFLWDVYSGYLLWEALV) threads the bilayer. Over 279–281 (YSD) the chain is Extracellular. Residues 282–302 (YLILLNSCLSPFLCLMASADL) form a helical membrane-spanning segment. Topologically, residues 303-470 (RTLLRSVLSS…PEAAPGAGPT (168 aa)) are cytoplasmic. The tract at residues 322–470 (PGSFTPTEPQ…PEAAPGAGPT (149 aa)) is disordered. Composition is skewed to polar residues over residues 325–335 (FTPTEPQTQLD) and 348–414 (AQSQ…NVQT). Residues 415–425 (PAPAASSVPSP) are compositionally biased toward low complexity.

It belongs to the G-protein coupled receptor 1 family.

It localises to the cell membrane. Functionally, orphan receptor. This is Probable G-protein coupled receptor 152 (GPR152) from Homo sapiens (Human).